Here is a 378-residue protein sequence, read N- to C-terminus: Chaperone protein DnaJ (378 aa).

In terms of domain architecture, J spans 3–67; the sequence is DYYDLLGVSK…QTRGRYDQFG (65 aa). The CR-type zinc finger occupies 133–215; it reads GQEREIKIPH…CAGQGVRQVR (83 aa). Zn(2+) contacts are provided by Cys-146, Cys-149, Cys-163, Cys-166, Cys-189, Cys-192, Cys-203, and Cys-206. CXXCXGXG motif repeat units lie at residues 146–153, 163–170, 189–196, and 203–210; these read CDTCNGTG, CSTCGGVG, CPSCEGTG, and CPACAGQG.

Belongs to the DnaJ family. As to quaternary structure, homodimer. Zn(2+) serves as cofactor.

It localises to the cytoplasm. Its function is as follows. Participates actively in the response to hyperosmotic and heat shock by preventing the aggregation of stress-denatured proteins and by disaggregating proteins, also in an autonomous, DnaK-independent fashion. Unfolded proteins bind initially to DnaJ; upon interaction with the DnaJ-bound protein, DnaK hydrolyzes its bound ATP, resulting in the formation of a stable complex. GrpE releases ADP from DnaK; ATP binding to DnaK triggers the release of the substrate protein, thus completing the reaction cycle. Several rounds of ATP-dependent interactions between DnaJ, DnaK and GrpE are required for fully efficient folding. Also involved, together with DnaK and GrpE, in the DNA replication of plasmids through activation of initiation proteins. The sequence is that of Chaperone protein DnaJ from Prochlorococcus marinus (strain MIT 9313).